Reading from the N-terminus, the 612-residue chain is Elongation factor 4 (612 aa).

A tr-type G domain is found at 11 to 193 (KHIRNFSIVA…EIVKKVPAPD (183 aa)). GTP contacts are provided by residues 23–28 (DHGKST) and 140–143 (NKID).

It belongs to the TRAFAC class translation factor GTPase superfamily. Classic translation factor GTPase family. LepA subfamily.

The protein resides in the cell membrane. It catalyses the reaction GTP + H2O = GDP + phosphate + H(+). Functionally, required for accurate and efficient protein synthesis under certain stress conditions. May act as a fidelity factor of the translation reaction, by catalyzing a one-codon backward translocation of tRNAs on improperly translocated ribosomes. Back-translocation proceeds from a post-translocation (POST) complex to a pre-translocation (PRE) complex, thus giving elongation factor G a second chance to translocate the tRNAs correctly. Binds to ribosomes in a GTP-dependent manner. This Lactobacillus johnsonii (strain CNCM I-12250 / La1 / NCC 533) protein is Elongation factor 4.